Consider the following 296-residue polypeptide: Phosphatidylglycerol--prolipoprotein diacylglyceryl transferase (296 aa).

A run of 4 helical transmembrane segments spans residues 10–30 (IAFS…LAAF), 57–77 (LLFY…MLFY), 92–112 (VWEG…ACWL), and 119–139 (LHFF…LGFG). Arginine 140 provides a ligand contact to a 1,2-diacyl-sn-glycero-3-phospho-(1'-sn-glycerol). A run of 3 helical transmembrane segments spans residues 194 to 214 (QLYE…TFSM), 220 to 240 (YAVS…VEFV), and 254 to 274 (WLTM…VLLA).

Belongs to the Lgt family.

The protein localises to the cell inner membrane. It carries out the reaction L-cysteinyl-[prolipoprotein] + a 1,2-diacyl-sn-glycero-3-phospho-(1'-sn-glycerol) = an S-1,2-diacyl-sn-glyceryl-L-cysteinyl-[prolipoprotein] + sn-glycerol 1-phosphate + H(+). Its pathway is protein modification; lipoprotein biosynthesis (diacylglyceryl transfer). In terms of biological role, catalyzes the transfer of the diacylglyceryl group from phosphatidylglycerol to the sulfhydryl group of the N-terminal cysteine of a prolipoprotein, the first step in the formation of mature lipoproteins. In Xanthomonas euvesicatoria pv. vesicatoria (strain 85-10) (Xanthomonas campestris pv. vesicatoria), this protein is Phosphatidylglycerol--prolipoprotein diacylglyceryl transferase.